Reading from the N-terminus, the 96-residue chain is Protein Vpr (96 aa).

Residues methionine 1 to leucine 42 form a homooligomerization region. Phosphoserine; by host is present on residues serine 79, serine 94, and serine 96.

Belongs to the HIV-1 VPR protein family. Homooligomer, may form homodimer. Interacts with p6-gag region of the Pr55 Gag precursor protein through a (Leu-X-X)4 motif near the C-terminus of the P6gag protein. Interacts with host UNG. May interact with host RAD23A/HHR23A. Interacts with host VPRBP/DCAF1, leading to hijack the CUL4A-RBX1-DDB1-DCAF1/VPRBP complex, mediating ubiquitination of host proteins such as TERT and ZGPAT and arrest of the cell cycle in G2 phase. Post-translationally, phosphorylated on several residues by host. These phosphorylations regulate VPR activity for the nuclear import of the HIV-1 pre-integration complex.

The protein localises to the virion. It is found in the host nucleus. The protein resides in the host extracellular space. Functionally, during virus replication, may deplete host UNG protein, and incude G2-M cell cycle arrest. Acts by targeting specific host proteins for degradation by the 26S proteasome, through association with the cellular CUL4A-DDB1 E3 ligase complex by direct interaction with host VPRPB/DCAF-1. Cell cycle arrest reportedly occurs within hours of infection and is not blocked by antiviral agents, suggesting that it is initiated by the VPR carried into the virion. Additionally, VPR induces apoptosis in a cell cycle dependent manner suggesting that these two effects are mechanistically linked. Detected in the serum and cerebrospinal fluid of AIDS patient, VPR may also induce cell death to bystander cells. Its function is as follows. During virus entry, plays a role in the transport of the viral pre-integration (PIC) complex to the host nucleus. This function is crucial for viral infection of non-dividing macrophages. May act directly at the nuclear pore complex, by binding nucleoporins phenylalanine-glycine (FG)-repeat regions. The chain is Protein Vpr from Human immunodeficiency virus type 1 group M subtype F1 (isolate VI850) (HIV-1).